A 129-amino-acid polypeptide reads, in one-letter code: Phosphoribosyl-AMP cyclohydrolase (129 aa).

Mg(2+) is bound at residue Asp-79. Cys-80 contributes to the Zn(2+) binding site. Asp-81 and Asp-83 together coordinate Mg(2+). Zn(2+) contacts are provided by Cys-96 and Cys-103.

Belongs to the PRA-CH family. In terms of assembly, homodimer. Mg(2+) serves as cofactor. Requires Zn(2+) as cofactor.

The protein resides in the cytoplasm. The enzyme catalyses 1-(5-phospho-beta-D-ribosyl)-5'-AMP + H2O = 1-(5-phospho-beta-D-ribosyl)-5-[(5-phospho-beta-D-ribosylamino)methylideneamino]imidazole-4-carboxamide. It functions in the pathway amino-acid biosynthesis; L-histidine biosynthesis; L-histidine from 5-phospho-alpha-D-ribose 1-diphosphate: step 3/9. Functionally, catalyzes the hydrolysis of the adenine ring of phosphoribosyl-AMP. This Magnetococcus marinus (strain ATCC BAA-1437 / JCM 17883 / MC-1) protein is Phosphoribosyl-AMP cyclohydrolase.